The primary structure comprises 270 residues: Tryptophan synthase alpha chain (270 aa).

Catalysis depends on proton acceptor residues Glu49 and Asp60.

The protein belongs to the TrpA family. In terms of assembly, tetramer of two alpha and two beta chains.

The catalysed reaction is (1S,2R)-1-C-(indol-3-yl)glycerol 3-phosphate + L-serine = D-glyceraldehyde 3-phosphate + L-tryptophan + H2O. Its pathway is amino-acid biosynthesis; L-tryptophan biosynthesis; L-tryptophan from chorismate: step 5/5. The alpha subunit is responsible for the aldol cleavage of indoleglycerol phosphate to indole and glyceraldehyde 3-phosphate. In Paraburkholderia phytofirmans (strain DSM 17436 / LMG 22146 / PsJN) (Burkholderia phytofirmans), this protein is Tryptophan synthase alpha chain.